The sequence spans 804 residues: Leucine--tRNA ligase (804 aa).

The short motif at 39 to 50 (PFPSGKGLHVGH) is the 'HIGH' region element. The 'KMSKS' region signature appears at 573–577 (KMSKS). Lysine 576 is a binding site for ATP.

It belongs to the class-I aminoacyl-tRNA synthetase family.

It is found in the cytoplasm. The catalysed reaction is tRNA(Leu) + L-leucine + ATP = L-leucyl-tRNA(Leu) + AMP + diphosphate. The chain is Leucine--tRNA ligase from Lactobacillus acidophilus (strain ATCC 700396 / NCK56 / N2 / NCFM).